Consider the following 906-residue polypeptide: uncharacterized protein (906 aa).

Disordered stretches follow at residues 231–322 (KEDA…PSTI) and 865–906 (AGAY…DEDE). Low complexity predominate over residues 236–250 (TTKQTTTTTTTTPQT). Residues 264 to 281 (TPTPAPAPKPTTPKPTPA) show a composition bias toward pro residues. Residues 302 to 314 (SVNNIPTPSDTNE) show a composition bias toward polar residues. Positions 867–906 (AYEDDDDDEGEGNEDDEDNDENEDEDEGEGEGDSSEDEDE) are enriched in acidic residues.

This is an uncharacterized protein from Dictyostelium sp. (strain GA11) (Slime mold).